A 492-amino-acid chain; its full sequence is Transcript termination protein A18 (492 aa).

One can recognise a Helicase ATP-binding domain in the interval 100–256 (MIELKRPLYI…NSIINIAKLS (157 aa)). 113-120 (LACGFGKT) contributes to the ATP binding site. The DESH box signature appears at 206-209 (DESH).

The protein belongs to the helicase family. Poxviruses subfamily. In terms of assembly, interacts with G2. Might be part of a transcription complex composed at least of G2, A18, and H5.

It is found in the virion. Its function is as follows. DNA helicase which seems to act as a postreplicative transcription termination factor. Involved in ATP-dependent release of nascent RNA. Forms a stable complex with single-stranded DNA, and to a lesser extent RNA. The sequence is that of Transcript termination protein A18 from Bos taurus (Bovine).